The chain runs to 390 residues: MLSRKGIIPEEYVLTRLAEDPAEPRYRARERRARFVSKKGNCNVAHKNIREQGRFLQDVFTTLVDLKWTHTLLIFTMSFLCSWLLFAMVWWLIAFAHGDLAPGEGAAVPCVTSIHSFSSAFLFSIEVQVTIGFGGRMVTEECPLAILILIVQNIVGLMINAIMLGCIFMKTAQAHRRAETLIFSKHAVIALRQGRLCFMLRVGDLRKSMIISATIHMQVVRKTTSPEGEVVPLHQVDIPMENGVGGNSIFLVAPLIIHHVIDANSPLYDLAPSDLHHHQDLEIIVILEGVVETTGITTQARTSYLADEILWGQRFVPIVAEEDGRYSVDYSKFGNTVKVPTPLCTARQLDEDRSLLDALTLTSARGPLRKRSVPVAKAKPKFSISPDSLS.

Over 1-65 (MLSRKGIIPE…LQDVFTTLVD (65 aa)) the chain is Cytoplasmic. 2 residues coordinate ATP: Asn-48 and Arg-50. A helical transmembrane segment spans residues 66-92 (LKWTHTLLIFTMSFLCSWLLFAMVWWL). At 93–116 (IAFAHGDLAPGEGAAVPCVTSIHS) the chain is on the extracellular side. Cys-110 and Cys-142 are oxidised to a cystine. Positions 117 to 133 (FSSAFLFSIEVQVTIGF) form an intramembrane region, discontinuously helical; Pore-forming. The K(+) site is built by Thr-130 and Phe-133. Residues 130-135 (TIGFGG) carry the Selectivity filter motif. The Extracellular portion of the chain corresponds to 134 to 142 (GGRMVTEEC). Residues 143-171 (PLAILILIVQNIVGLMINAIMLGCIFMKT) form a helical membrane-spanning segment. At 172–390 (AQAHRRAETL…KFSISPDSLS (219 aa)) the chain is on the cytoplasmic side. Arg-176 provides a ligand contact to a 1,2-diacyl-sn-glycero-3-phospho-(1D-myo-inositol-4,5-bisphosphate). Tyr-330 is a binding site for ATP. Thr-341 bears the Phosphothreonine; by MAPK1 mark. Ser-385 carries the post-translational modification Phosphoserine; by MAPK1.

Belongs to the inward rectifier-type potassium channel (TC 1.A.2.1) family. KCNJ11 subfamily. As to quaternary structure, homotetramer; the homotetramer binds four ATP molecules (one ATP per subunit). Forms an heterooctamer with ABCC8/SUR1; one KCNJ11 homotetramer interacts with four ABCC8/SUR1 molecules. Interacts with ABCC9/SUR2. In terms of processing, phosphorylation by MAPK1 results in changes in channel gating that destabilize the closed states and reduce the ATP sensitivity.

The protein localises to the membrane. The enzyme catalyses K(+)(in) = K(+)(out). KATP channels are regulated by cytoplasmic ATP/ADP ratios; ATP inhibits the channel by closing the pore, while ADP activates the channel. Activated by phosphatidylinositol 4,5-biphosphate (PtdIns(4,5)P2). Its function is as follows. Inward rectifier potassium channel that forms the pore of ATP-sensitive potassium channels (KATP), regulating potassium permeability as a function of cytoplasmic ATP and ADP concentrations in many different cells. Inward rectifier potassium channels are characterized by a greater tendency to allow potassium to flow into the cell rather than out of it. Their voltage dependence is regulated by the concentration of extracellular potassium; as external potassium is raised, the voltage range of the channel opening shifts to more positive voltages. The inward rectification is mainly due to the blockage of outward current by internal magnesium. Can be blocked by extracellular barium. In pancreatic cells, it forms KATP channels with ABCC8/SUR1. Can form cardiac and smooth muscle-type KATP channels with ABCC9. The polypeptide is ATP-sensitive inward rectifier potassium channel 11 (KCNJ11) (Oryctolagus cuniculus (Rabbit)).